The chain runs to 375 residues: Putative fimbrium tip subunit Fim1C (375 aa).

A signal peptide spans 1–16 (MKLLANIFLSGLAILA). Cys17 carries the N-palmitoyl cysteine lipid modification. Cys17 is lipidated: S-diacylglycerol cysteine. Positions 17–47 (CVSCSKDEDPVLPLEGAKLSVAVKASGTATK) are excised as a propeptide.

The protein belongs to the bacteroidetes fimbrillin superfamily. FimA/Mfa1 family. In terms of assembly, may be part of the fimbrial tip.

The protein resides in the fimbrium. The protein localises to the cell outer membrane. Functionally, probably a component of the fimbrium tip. Fimbriae are filamentous appendages on the cell surface that mediate cell adhesion and biofilm formation. This chain is Putative fimbrium tip subunit Fim1C, found in Parabacteroides distasonis (strain ATCC 8503 / DSM 20701 / CIP 104284 / JCM 5825 / NCTC 11152).